The sequence spans 428 residues: Phosphomethylpyrimidine synthase 2 (428 aa).

Substrate is bound by residues Asn65, Met94, Tyr123, His158, 180 to 182 (SRG), 221 to 224 (DGMR), and Glu260. Residue His264 participates in Zn(2+) binding. Tyr287 contacts substrate. Residue His328 coordinates Zn(2+). Residues Cys405, Cys408, and Cys412 each coordinate [4Fe-4S] cluster.

This sequence belongs to the ThiC family. [4Fe-4S] cluster serves as cofactor.

It catalyses the reaction 5-amino-1-(5-phospho-beta-D-ribosyl)imidazole + S-adenosyl-L-methionine = 4-amino-2-methyl-5-(phosphooxymethyl)pyrimidine + CO + 5'-deoxyadenosine + formate + L-methionine + 3 H(+). It participates in cofactor biosynthesis; thiamine diphosphate biosynthesis. Functionally, catalyzes the synthesis of the hydroxymethylpyrimidine phosphate (HMP-P) moiety of thiamine from aminoimidazole ribotide (AIR) in a radical S-adenosyl-L-methionine (SAM)-dependent reaction. The polypeptide is Phosphomethylpyrimidine synthase 2 (Methanosarcina barkeri (strain Fusaro / DSM 804)).